The sequence spans 726 residues: Putative tyrosine-protein kinase AmsA (726 aa).

Helical transmembrane passes span 32–52 (WMIV…SLFA) and 425–445 (ILIV…LVLM).

The protein belongs to the etk/wzc family.

Its subcellular location is the cell inner membrane. The catalysed reaction is L-tyrosyl-[protein] + ATP = O-phospho-L-tyrosyl-[protein] + ADP + H(+). It functions in the pathway glycan metabolism; exopolysaccharide biosynthesis. Its function is as follows. Involved in the biosynthesis of amylovoran which functions as a virulence factor. The chain is Putative tyrosine-protein kinase AmsA (amsA) from Erwinia amylovora (Fire blight bacteria).